The chain runs to 63 residues: Large ribosomal subunit protein uL29 (63 aa).

It belongs to the universal ribosomal protein uL29 family.

The chain is Large ribosomal subunit protein uL29 from Vibrio vulnificus (strain CMCP6).